We begin with the raw amino-acid sequence, 3912 residues long: Chondramide synthase cmdD (3912 aa).

The region spanning A1411–K1485 is the Carrier 1 domain. S1446 carries the post-translational modification O-(pantetheine 4'-phosphoryl)serine. The segment covering A1995–E2029 has biased composition (acidic residues). The interval A1995–N2030 is disordered. Positions A2989 to L3064 constitute a Carrier 2 domain. Position 3024 is an O-(pantetheine 4'-phosphoryl)serine (S3024).

The protein belongs to the ATP-dependent AMP-binding enzyme family. It depends on pantetheine 4'-phosphate as a cofactor.

Functionally, involved in the synthesis of chondramides. Activates R-beta-tyrosine and probably phenylalanine. This chain is Chondramide synthase cmdD, found in Chondromyces crocatus.